A 517-amino-acid chain; its full sequence is Ribonuclease Y (517 aa).

Residues 1-21 (MIEFLIGLIAAVVGILVGYLI) traverse the membrane as a helical segment. The KH domain maps to 207–271 (LINVVNIKND…IAVRTVELLV (65 aa)). Residues 333 to 426 (ALIHSLEVAH…VCTADVLSAA (94 aa)) form the HD domain.

Belongs to the RNase Y family.

The protein localises to the cell membrane. Functionally, endoribonuclease that initiates mRNA decay. This Campylobacter hominis (strain ATCC BAA-381 / DSM 21671 / CCUG 45161 / LMG 19568 / NCTC 13146 / CH001A) protein is Ribonuclease Y.